Here is a 1813-residue protein sequence, read N- to C-terminus: Latent-transforming growth factor beta-binding protein 2 (1813 aa).

An N-terminal signal peptide occupies residues 1–35 (MRAPTTARCSGCIQRVRWRGFLPLVLAVLMGTSHA). Residues 94–115 (NPGWLAEAEARRPPRTQQLRRV) form a heparin-binding region. Positions 103–152 (ARRPPRTQQLRRVQPPVQTRRSHPRGQQQIAARAAPSVARLETPQRPAAA) are disordered. Residues 108-132 (RTQQLRRVQPPVQTRRSHPRGQQQI) show a composition bias toward polar residues. N175 is a glycosylation site (N-linked (GlcNAc...) asparagine). The EGF-like 1 domain maps to 181–213 (IKPVCQPPCQNRGSCSRPQVCICRSGFRGARCE). 3 disulfide bridges follow: C185–C195, C189–C201, and C203–C212. The disordered stretch occupies residues 220–305 (EFDPQNARPV…QLMSNALPSG (86 aa)). The heparin-binding stretch occupies residues 226 to 243 (ARPVPRRSVERAPGPHRS). Pro residues predominate over residues 257 to 266 (LVPPPSPPPS). The segment covering 293–302 (ANGQLMSNAL) has biased composition (polar residues). An N-linked (GlcNAc...) asparagine glycan is attached at N328. Position 329-339 (329-339 (LTEKIKKIKVV)) interacts with heparin. Residues 381-413 (RIYFCQIPCLNGGRCIGRDECWCPANSTGKFCH) enclose the EGF-like 2 domain. Disulfide bonds link C385-C395, C389-C401, and C403-C412. Residue N406 is glycosylated (N-linked (GlcNAc...) asparagine). Position 491 is a phosphoserine (S491). Positions 492–524 (VETRASHRPHGNLGHSPWASNSIPARAGEAPRP) are disordered. Residues 536–588 (GQCYLSTVNGQCANPLGSLTSQEDCCGSVGTFWGVTSCAPCPPRQEGPAFPVI) form the TB 1 domain. 3 cysteine pairs are disulfide-bonded: C538–C560, C547–C573, and C561–C576. The N-linked (GlcNAc...) asparagine glycan is linked to N603. The 41-residue stretch at 609 to 649 (DINECLTLGLCKDSECVNTRGSYLCTCRPGLMLDPSRSRCV) folds into the EGF-like 3; calcium-binding domain. 7 disulfide bridges follow: C613–C624, C619–C633, C635–C648, C661–C683, C670–C696, C684–C699, and C685–C711. The 53-residue stretch at 659 to 711 (GLCYRSLGSGTCTLPLVHRITKQICCCSRVGKAWGSTCEQCPLPGTEAFREIC) folds into the TB 2 domain. 2 disordered regions span residues 730-761 (KAEE…QPLR) and 787-819 (SAPH…PAEE). In terms of domain architecture, EGF-like 4 spans 835–877 (DFDPCFAGASNICGPGTCVSLPNGYRCVCSPGYQLHPSQDYCT). 49 cysteine pairs are disulfide-bonded: C839-C852, C847-C861, C863-C876, C882-C893, C887-C902, C904-C919, C925-C936, C931-C945, C947-C959, C965-C976, C971-C985, C988-C999, C1005-C1016, C1011-C1025, C1027-C1040, C1046-C1057, C1052-C1066, C1069-C1082, C1088-C1099, C1094-C1108, C1111-C1124, C1130-C1142, C1137-C1151, C1153-C1165, C1171-C1183, C1177-C1192, C1194-C1207, C1213-C1224, C1219-C1233, C1235-C1249, C1255-C1268, C1263-C1277, C1281-C1293, C1299-C1311, C1305-C1320, C1322-C1335, C1341-C1353, C1348-C1362, C1364-C1378, C1405-C1428, C1415-C1440, C1429-C1443, C1430-C1455, C1481-C1494, C1489-C1503, C1505-C1518, C1524-C1534, C1529-C1543, and C1545-C1558. An EGF-like 5; calcium-binding domain is found at 878–920 (DDNECMRNPCEGRGRCVNSVGSYSCLCYPGYTLVTLGDTQECQ). Residues 921 to 960 (DIDECEQPGVCSGGRCSNTEGSYHCECDRGYIMVRKGHCQ) enclose the EGF-like 6; calcium-binding domain. The EGF-like 7; calcium-binding domain occupies 961–1000 (DINECRHPGTCPDGRCVNSPGSYTCLACEEGYVGQSGSCV). Residues 1001 to 1041 (DVNECLTPGICTHGRCINMEGSFRCSCEPGYEVTPDKKGCR) enclose the EGF-like 8; calcium-binding domain. Residues 1042-1083 (DVDECASRASCPTGLCLNTEGSFTCSACQSGYWVNEDGTACE) form the EGF-like 9; calcium-binding domain. Residues 1084–1125 (DLDECAFPGVCPTGVCTNTVGSFSCKDCDQGYRPNPLGNRCE) enclose the EGF-like 10; calcium-binding domain. One can recognise an EGF-like 11; calcium-binding domain in the interval 1126–1166 (DVDECEGPQSSCRGGECKNTEGSYQCLCHQGFQLVNGTMCE). N-linked (GlcNAc...) asparagine glycosylation is present at N1161. Positions 1167 to 1208 (DVNECVGEEHCAPHGECLNSLGSFFCLCAPGFASAEGGTRCQ) constitute an EGF-like 12; calcium-binding domain. An EGF-like 13; calcium-binding domain is found at 1209-1250 (DVDECAATDPCPGGHCVNTEGSFSCLCETASFQPSPDSGECL). An EGF-like 14; calcium-binding domain is found at 1251–1294 (DIDECEDREDPVCGAWRCENSPGSYRCILDCQPGFYVAPNGDCI). Positions 1295–1336 (DIDECANDTVCGNHGFCDNTDGSFRCLCDQGFETSPSGWECV) constitute an EGF-like 15; calcium-binding domain. N-linked (GlcNAc...) asparagine glycosylation is present at N1301. The 43-residue stretch at 1337–1379 (DVNECELMMAVCGDALCENVEGSFLCLCASDLEEYDAEEGHCR) folds into the EGF-like 16; calcium-binding domain. The TB 3 domain occupies 1403 to 1455 (MECYSEHNGGPPCSQILGQNSTQAECCCTQGARWGKACAPCPSEDSVEFSQLC). N-linked (GlcNAc...) asparagine glycosylation occurs at N1422. The 43-residue stretch at 1477–1519 (DADECVLFGPALCQNGRCSNIVPGYICLCNPGYHYDASSRKCQ) folds into the EGF-like 17; calcium-binding domain. Residues 1520 to 1559 (DHNECQDLACENGECVNQEGSFHCLCNPPLTLDLSGQRCV) form the EGF-like 18; calcium-binding domain. A glycan (N-linked (GlcNAc...) asparagine) is linked at N1560. Positions 1576-1628 (DICWKKVTNDVCSQPLRGHHTTYTECCCQDGEAWSQQCALCPPRSSEVYAQLC) constitute a TB 4 domain. Cystine bridges form between C1578–C1601, C1587–C1613, C1602–C1616, and C1603–C1628. Residues 1631–1813 (ARIEAERGAG…PGPPHCAAKE (183 aa)) form a C-terminal domain region. A disordered region spans residues 1671-1717 (YLGPEDTAPEPPFSNPASQPGDNTPVLEPPLQPSELQPHYLASHSEP). In terms of domain architecture, EGF-like 19; calcium-binding spans 1725–1765 (QAEECGILNGCENGRCVRVREGYTCDCFEGFQLDAPTLACV). 6 disulfides stabilise this stretch: C1729–C1740, C1735–C1749, C1751–C1764, C1770–C1785, C1780–C1794, and C1796–C1809. An EGF-like 20; calcium-binding domain is found at 1766 to 1810 (DVNECEDLNGPARLCAHGHCENTEGSYRCHCSPGYVAEPGPPHCA).

This sequence belongs to the LTBP family. In terms of assembly, forms part of the large latent transforming growth factor beta precursor complex; removal is essential for activation of complex. Interacts with SDC4. Interacts (via C-terminal domain) with FBN1 (via N-terminal domain) in a Ca(+2)-dependent manner. Post-translationally, N-Glycosylated. In terms of processing, contains hydroxylated asparagine residues. Expressed in the anterior chamber of the eye.

The protein resides in the secreted. Its subcellular location is the extracellular space. It is found in the extracellular matrix. Functionally, may play an integral structural role in elastic-fiber architectural organization and/or assembly. This is Latent-transforming growth factor beta-binding protein 2 (Ltbp2) from Mus musculus (Mouse).